Reading from the N-terminus, the 413-residue chain is uncharacterized protein (413 aa).

This sequence belongs to the mycobacterial PPE family.

This is an uncharacterized protein from Mycobacterium tuberculosis (strain CDC 1551 / Oshkosh).